Here is a 337-residue protein sequence, read N- to C-terminus: Beta-ketoacyl-[acyl-carrier-protein] synthase III (337 aa).

Catalysis depends on residues cysteine 119 and histidine 260. Positions 261 to 265 (QANQR) are ACP-binding. Asparagine 290 is an active-site residue.

Belongs to the thiolase-like superfamily. FabH family. As to quaternary structure, homodimer.

It is found in the cytoplasm. It catalyses the reaction malonyl-[ACP] + acetyl-CoA + H(+) = 3-oxobutanoyl-[ACP] + CO2 + CoA. The protein operates within lipid metabolism; fatty acid biosynthesis. Its function is as follows. Catalyzes the condensation reaction of fatty acid synthesis by the addition to an acyl acceptor of two carbons from malonyl-ACP. Catalyzes the first condensation reaction which initiates fatty acid synthesis and may therefore play a role in governing the total rate of fatty acid production. Possesses both acetoacetyl-ACP synthase and acetyl transacylase activities. Its substrate specificity determines the biosynthesis of branched-chain and/or straight-chain of fatty acids. The polypeptide is Beta-ketoacyl-[acyl-carrier-protein] synthase III (Synechococcus sp. (strain WH7803)).